A 730-amino-acid polypeptide reads, in one-letter code: Pentatricopeptide repeat-containing protein At5g64320, mitochondrial (730 aa).

The N-terminal 18 residues, 1 to 18, are a transit peptide targeting the mitochondrion; sequence MVMLARSKLALDVSRRSQ. PPR repeat units follow at residues 110 to 144, 145 to 175, 181 to 215, 216 to 250, 251 to 285, 286 to 320, 321 to 351, 352 to 387, 388 to 422, 423 to 457, 458 to 492, 493 to 527, 528 to 562, 563 to 597, 598 to 632, 633 to 667, and 668 to 702; these read SFDV…GIVF, KESL…MRNV, TFKS…KIPP, TLFT…GCVP, NSVI…GCVP, DAET…GFAP, DDIT…IPKP, EIVI…GIVP, DVCT…GCKP, NVYS…GLKP, NTVG…GCKP, DVYT…GVVA, NTVT…GSPL, DEIT…GHAP, SNIS…GSTP, DIVT…GIPP, and DTVT…GFVP.

This sequence belongs to the PPR family. P subfamily.

The protein resides in the mitochondrion. In Arabidopsis thaliana (Mouse-ear cress), this protein is Pentatricopeptide repeat-containing protein At5g64320, mitochondrial.